The primary structure comprises 1724 residues: Protein mono-ADP-ribosyltransferase PARP4 (1724 aa).

Residues 1–94 (MVMGIFANCI…RLLDVKNYDP (94 aa)) enclose the BRCT domain. Positions 19 to 25 (PQQQKKK) match the Nuclear localization signal motif. The disordered stretch occupies residues 97–123 (PLDITPPPDQKASSSEVKTEGLCPDSA). Residues T101 and T333 each carry the phosphothreonine modification. The 129-residue stretch at 242 to 370 (SEQLQALLLE…ETNLSKPNPP (129 aa)) folds into the PARP alpha-helical domain. The PARP catalytic domain maps to 369–573 (PPSLAKYRAL…FSMPGDQIKD (205 aa)). Positions 607-735 (SSTKAGLQDA…KVLIKITYIT (129 aa)) constitute a VIT domain. The 171-residue stretch at 876 to 1046 (EVIICLDCSS…KQIEDQMTRL (171 aa)) folds into the VWFA domain. S1236 is subject to Phosphoserine. A Nuclear localization signal motif is present at residues 1237–1249 (KRKHRKIPFSKRK). At S1335 the chain carries Phosphoserine. The interval 1408–1452 (SAQSAPLQHPGGFTTRPSAGTFPELDSPQLHFSLPTDPDPIRGFG) is disordered. The residue at position 1476 (R1476) is an Asymmetric dimethylarginine. Phosphoserine is present on S1504. Positions 1562-1724 (VCIQHWQDAV…LHRVLHYSQG (163 aa)) are interaction with the major vault protein.

This sequence belongs to the ARTD/PARP family. Component of the vault ribonucleoprotein particle, at least composed of MVP, PARP4 and one or more vault RNAs (vRNAs). Interacts with TEP1. In terms of tissue distribution, widely expressed; the highest levels are in the kidney; also detected in heart, placenta, lung, liver, skeletal muscle, spleen, leukocytes and pancreas.

The protein localises to the cytoplasm. It localises to the nucleus. Its subcellular location is the cytoskeleton. The protein resides in the spindle. The enzyme catalyses L-aspartyl-[protein] + NAD(+) = 4-O-(ADP-D-ribosyl)-L-aspartyl-[protein] + nicotinamide. The catalysed reaction is L-glutamyl-[protein] + NAD(+) = 5-O-(ADP-D-ribosyl)-L-glutamyl-[protein] + nicotinamide. Its function is as follows. Mono-ADP-ribosyltransferase that mediates mono-ADP-ribosylation of target proteins. The protein is Protein mono-ADP-ribosyltransferase PARP4 of Homo sapiens (Human).